The primary structure comprises 293 residues: Ribonuclease HIII (293 aa).

Residues 78 to 293 form the RNase H type-2 domain; that stretch reads LPLIGTDEVG…TEKAKKRLER (216 aa). Aspartate 84, glutamate 85, and aspartate 187 together coordinate a divalent metal cation.

Belongs to the RNase HII family. RnhC subfamily. Mn(2+) is required as a cofactor. It depends on Mg(2+) as a cofactor.

The protein resides in the cytoplasm. It catalyses the reaction Endonucleolytic cleavage to 5'-phosphomonoester.. In terms of biological role, endonuclease that specifically degrades the RNA of RNA-DNA hybrids. The polypeptide is Ribonuclease HIII (Streptococcus pneumoniae (strain 70585)).